The sequence spans 135 residues: Large ribosomal subunit protein uL16c (135 aa).

Belongs to the universal ribosomal protein uL16 family. As to quaternary structure, part of the 50S ribosomal subunit.

It localises to the plastid. The protein resides in the chloroplast. The sequence is that of Large ribosomal subunit protein uL16c from Nymphaea alba (White water-lily).